Reading from the N-terminus, the 508-residue chain is Monocarboxylate transporter 9 (508 aa).

The next 6 membrane-spanning stretches (helical) occupy residues 13 to 33 (WVIV…PLAV), 53 to 73 (WVGS…SLFV), 80 to 100 (PVTI…SLAP), 102 to 122 (IYFL…LLYT), 137 to 157 (GLAL…YAAL), and 164 to 184 (FYGL…ILAC). The interval 242-263 (GDWGRETSLPKNPTGAAHTKEP) is disordered. 6 consecutive transmembrane segments (helical) span residues 303–323 (VFSA…PPSL), 341–361 (IPLI…LGIL), 370–390 (LYLY…IPLA), 396–416 (LAIL…FPYV), 431–451 (GILM…VGWF), and 460–480 (IAFY…LLAI).

The protein belongs to the major facilitator superfamily. Monocarboxylate porter (TC 2.A.1.13) family. In terms of tissue distribution, expressed in the liver and kidneys. In the liver localizes on the sinusoidal membrane of the hepatocytes.

It is found in the cell membrane. The enzyme catalyses creatine(in) = creatine(out). The catalysed reaction is (R)-carnitine(in) = (R)-carnitine(out). Functionally, extracellular pH-and Na(+)-sensitive low-affinity creatine transporter. Also functions as a pH-independent carnitine efflux transporter. This is Monocarboxylate transporter 9 (Slc16a9) from Rattus norvegicus (Rat).